Consider the following 697-residue polypeptide: Zinc finger and BTB domain-containing protein 24 (697 aa).

Positions Gly-10–Ser-133 constitute a BTB domain. The span at Asn-131 to Thr-142 shows a compositional bias: polar residues. Disordered stretches follow at residues Asn-131–Ser-176 and Glu-209–Ser-254. A DNA-binding region (a.T hook) is located at residues Lys-159–Leu-171. Basic and acidic residues predominate over residues Ala-212–Asp-245. C2H2-type zinc fingers lie at residues Ala-294–His-316, Phe-322–His-344, Tyr-350–His-372, Phe-378–His-400, Pro-406–His-428, Phe-434–His-456, Tyr-462–His-484, and Phe-490–His-512. The segment at Gln-652 to Ser-697 is disordered. The span at Pro-677–Thr-690 shows a compositional bias: pro residues.

It belongs to the krueppel C2H2-type zinc-finger protein family. Interacts with MN1. In terms of tissue distribution, widely expressed, with highest levels in naive B-cells.

It is found in the nucleus. Its function is as follows. May be involved in BMP2-induced transcription. The polypeptide is Zinc finger and BTB domain-containing protein 24 (ZBTB24) (Homo sapiens (Human)).